Here is a 215-residue protein sequence, read N- to C-terminus: Nucleoside triphosphate pyrophosphatase (215 aa).

The Proton acceptor role is filled by D80.

It belongs to the Maf family. A divalent metal cation is required as a cofactor.

The protein localises to the cytoplasm. The catalysed reaction is a ribonucleoside 5'-triphosphate + H2O = a ribonucleoside 5'-phosphate + diphosphate + H(+). The enzyme catalyses a 2'-deoxyribonucleoside 5'-triphosphate + H2O = a 2'-deoxyribonucleoside 5'-phosphate + diphosphate + H(+). Its function is as follows. Nucleoside triphosphate pyrophosphatase. May have a dual role in cell division arrest and in preventing the incorporation of modified nucleotides into cellular nucleic acids. In Leifsonia xyli subsp. xyli (strain CTCB07), this protein is Nucleoside triphosphate pyrophosphatase.